The primary structure comprises 905 residues: Protein translocase subunit SecA (905 aa).

ATP is bound by residues Gln-87, 105–109 (GEGKT), and Asp-512. The tract at residues 840–905 (AQRQQEAMAQ…HCHGSKARYA (66 aa)) is disordered. Over residues 843-852 (QQEAMAQAES) the composition is skewed to low complexity. Residues 853-862 (ENYRTADHQA) are compositionally biased toward basic and acidic residues. Over residues 863 to 874 (EAQQSESLTEEQ) the composition is skewed to polar residues. Residues Cys-886, Cys-888, Cys-897, and His-898 each contribute to the Zn(2+) site. The span at 892–905 (KKYKHCHGSKARYA) shows a compositional bias: basic residues.

It belongs to the SecA family. In terms of assembly, monomer and homodimer. Part of the essential Sec protein translocation apparatus which comprises SecA, SecYEG and auxiliary proteins SecDF-YajC and YidC. The cofactor is Zn(2+).

Its subcellular location is the cell inner membrane. It is found in the cytoplasm. The enzyme catalyses ATP + H2O + cellular proteinSide 1 = ADP + phosphate + cellular proteinSide 2.. Its function is as follows. Part of the Sec protein translocase complex. Interacts with the SecYEG preprotein conducting channel. Has a central role in coupling the hydrolysis of ATP to the transfer of proteins into and across the cell membrane, serving both as a receptor for the preprotein-SecB complex and as an ATP-driven molecular motor driving the stepwise translocation of polypeptide chains across the membrane. The protein is Protein translocase subunit SecA of Actinobacillus pleuropneumoniae serotype 3 (strain JL03).